Consider the following 840-residue polypeptide: Axin-2 (840 aa).

The segment at 1–75 (MSSAVLVTLL…EGRASPDSPL (75 aa)) is disordered. Positions 21–30 (APRPPVPGEE) match the Tankyrase-binding motif motif. Residues 42-55 (KVQSTKPMPVSSNA) are compositionally biased toward polar residues. Basic and acidic residues predominate over residues 56–69 (RRNEDGLGEPEGRA). Positions 81-200 (SLHSLLGDQD…LTSDIYLEYV (120 aa)) constitute an RGS domain. Disordered regions lie at residues 300–363 (SELS…KEMT), 398–435 (IREDEEKEGSEQALSSRDGAPVQHPLALLPSGSYEEDP), 447–485 (LKTPGCQSPGVGRYSPRSRSPDHHHQHHHHQQCHTLLPT), 572–614 (RGGT…GDRS), and 715–745 (ASQQRDRNHSAAGQAGASPFANPSLAPEDHK). Low complexity predominate over residues 303–318 (SSDALTDDSMSMTDSS). An interaction with GSK3B region spans residues 327-413 (MGSKKQLQRE…KEGSEQALSS (87 aa)). Residues 413 to 478 (SRDGAPVQHP…HHHQHHHHQQ (66 aa)) are interaction with beta-catenin. Residues 468–478 (DHHHQHHHHQQ) show a composition bias toward basic residues. Residues 758–840 (ASELVVTYFF…RILGKVERID (83 aa)) form the DIX domain.

Interacts with glycogen synthase kinase-3 beta (GSK3B) and beta-catenin. The interaction between axin and beta-catenin occurs via the armadillo repeats contained in beta-catenin. Interacts with SMAD7 and RNF111. Interacts with ANKRD6. Interacts with SIAH1. Interacts with SIAH2. ADP-ribosylated by tankyrase TNKS and TNKS2. Poly-ADP-ribosylated protein is recognized by RNF146, followed by ubiquitination and subsequent activation of the Wnt signaling pathway. In terms of processing, ubiquitinated by RNF146 when poly-ADP-ribosylated, leading to its degradation and subsequent activation of the Wnt signaling pathway. Deubiquitinated by USP34, deubiquitinated downstream of beta-catenin stabilization step: deubiquitination is important Wnt signaling to positively regulate beta-catenin (CTNBB1)-mediated transcription. Post-translationally, probably phosphorylated by GSK3B and dephosphorylated by PP2A. Expressed in Tcf7-positive innate-like T-cells (at protein level).

It is found in the cytoplasm. Functionally, inhibitor of the Wnt signaling pathway. Down-regulates beta-catenin. Probably facilitate the phosphorylation of beta-catenin and APC by GSK3B. The sequence is that of Axin-2 from Mus musculus (Mouse).